Reading from the N-terminus, the 172-residue chain is Adenine phosphoribosyltransferase (172 aa).

It belongs to the purine/pyrimidine phosphoribosyltransferase family. In terms of assembly, homodimer.

Its subcellular location is the cytoplasm. The enzyme catalyses AMP + diphosphate = 5-phospho-alpha-D-ribose 1-diphosphate + adenine. It functions in the pathway purine metabolism; AMP biosynthesis via salvage pathway; AMP from adenine: step 1/1. Its function is as follows. Catalyzes a salvage reaction resulting in the formation of AMP, that is energically less costly than de novo synthesis. In Roseiflexus castenholzii (strain DSM 13941 / HLO8), this protein is Adenine phosphoribosyltransferase.